The following is a 53-amino-acid chain: UPF0391 membrane protein Patl_1732 (53 aa).

2 helical membrane passes run 4–24 and 28–48; these read WAVIFLVIALVAAVLGFGGIA and AGIAKIIFFVFLVLLVISVVM.

It belongs to the UPF0391 family.

It is found in the cell membrane. In Pseudoalteromonas atlantica (strain T6c / ATCC BAA-1087), this protein is UPF0391 membrane protein Patl_1732.